The chain runs to 263 residues: Chymotrypsinogen B (263 aa).

The signal sequence occupies residues 1–18; sequence MASLWLLSCFSLVGAAFG. Intrachain disulfides connect cysteine 19–cysteine 140, cysteine 60–cysteine 76, cysteine 154–cysteine 219, cysteine 186–cysteine 200, and cysteine 209–cysteine 238. Positions 34–261 constitute a Peptidase S1 domain; the sequence is IVNGEDAVPG…LIPWVQKILA (228 aa). The active-site Charge relay system is histidine 75. Position 93 is a phosphoserine (serine 93). The active-site Charge relay system is the aspartate 120. The active-site Charge relay system is the serine 213.

It belongs to the peptidase S1 family.

It is found in the secreted. It localises to the extracellular space. It carries out the reaction Preferential cleavage: Tyr-|-Xaa, Trp-|-Xaa, Phe-|-Xaa, Leu-|-Xaa.. This chain is Chymotrypsinogen B, found in Homo sapiens (Human).